Here is a 502-residue protein sequence, read N- to C-terminus: Probable cytosol aminopeptidase (502 aa).

Mn(2+)-binding residues include K269 and D274. The active site involves K281. Positions 292, 351, and 353 each coordinate Mn(2+). R355 is a catalytic residue.

The protein belongs to the peptidase M17 family. The cofactor is Mn(2+).

It localises to the cytoplasm. It catalyses the reaction Release of an N-terminal amino acid, Xaa-|-Yaa-, in which Xaa is preferably Leu, but may be other amino acids including Pro although not Arg or Lys, and Yaa may be Pro. Amino acid amides and methyl esters are also readily hydrolyzed, but rates on arylamides are exceedingly low.. It carries out the reaction Release of an N-terminal amino acid, preferentially leucine, but not glutamic or aspartic acids.. Presumably involved in the processing and regular turnover of intracellular proteins. Catalyzes the removal of unsubstituted N-terminal amino acids from various peptides. This Shewanella frigidimarina (strain NCIMB 400) protein is Probable cytosol aminopeptidase.